Consider the following 265-residue polypeptide: Undecaprenyl-diphosphatase (265 aa).

7 helical membrane-spanning segments follow: residues 42 to 62 (ATTF…VLYW), 82 to 102 (GIML…AAHS), 108 to 128 (LFTP…MLLV), 143 to 163 (MSPA…WPGF), 181 to 201 (GLAA…ATGY), 221 to 241 (GFVV…ALVG), and 248 to 264 (FAWY…YFMA).

It belongs to the UppP family.

It localises to the cell inner membrane. The catalysed reaction is di-trans,octa-cis-undecaprenyl diphosphate + H2O = di-trans,octa-cis-undecaprenyl phosphate + phosphate + H(+). In terms of biological role, catalyzes the dephosphorylation of undecaprenyl diphosphate (UPP). Confers resistance to bacitracin. This chain is Undecaprenyl-diphosphatase, found in Nitratidesulfovibrio vulgaris (strain ATCC 29579 / DSM 644 / CCUG 34227 / NCIMB 8303 / VKM B-1760 / Hildenborough) (Desulfovibrio vulgaris).